The primary structure comprises 338 residues: Ribosomal RNA small subunit methyltransferase H (338 aa).

S-adenosyl-L-methionine is bound by residues 53-55 (GGH), Asp-72, Tyr-99, Asp-123, and Gln-130. Disordered regions lie at residues 276 to 297 (EITP…PGMG) and 304 to 323 (TRGA…RSAP).

This sequence belongs to the methyltransferase superfamily. RsmH family.

It localises to the cytoplasm. It catalyses the reaction cytidine(1402) in 16S rRNA + S-adenosyl-L-methionine = N(4)-methylcytidine(1402) in 16S rRNA + S-adenosyl-L-homocysteine + H(+). Its function is as follows. Specifically methylates the N4 position of cytidine in position 1402 (C1402) of 16S rRNA. The protein is Ribosomal RNA small subunit methyltransferase H of Rhodococcus jostii (strain RHA1).